Consider the following 319-residue polypeptide: Acetyl-coenzyme A carboxylase carboxyl transferase subunit alpha (319 aa).

Positions 35 to 296 (NIDEEVHRLR…KAQLLEDLAD (262 aa)) constitute a CoA carboxyltransferase C-terminal domain.

This sequence belongs to the AccA family. In terms of assembly, acetyl-CoA carboxylase is a heterohexamer composed of biotin carboxyl carrier protein (AccB), biotin carboxylase (AccC) and two subunits each of ACCase subunit alpha (AccA) and ACCase subunit beta (AccD).

The protein resides in the cytoplasm. It carries out the reaction N(6)-carboxybiotinyl-L-lysyl-[protein] + acetyl-CoA = N(6)-biotinyl-L-lysyl-[protein] + malonyl-CoA. Its pathway is lipid metabolism; malonyl-CoA biosynthesis; malonyl-CoA from acetyl-CoA: step 1/1. Functionally, component of the acetyl coenzyme A carboxylase (ACC) complex. First, biotin carboxylase catalyzes the carboxylation of biotin on its carrier protein (BCCP) and then the CO(2) group is transferred by the carboxyltransferase to acetyl-CoA to form malonyl-CoA. The polypeptide is Acetyl-coenzyme A carboxylase carboxyl transferase subunit alpha (Salmonella agona (strain SL483)).